The sequence spans 310 residues: Protein CUP-SHAPED COTYLEDON 1 (310 aa).

The 153-residue stretch at 20–172 folds into the NAC domain; sequence MPPGFRFHPT…EWVLCKVCLK (153 aa). The DNA-binding element occupies 119–178; it reads LGMKKTLVFYKGRAPKGEKSCWVMHEYRLDGKFSYHYISSSAKDEWVLCKVCLKSGVVSR. Involved in transactivation activity stretches follow at residues 179 to 210 and 306 to 310; these read ETNLISSSSSSAVTGEFSSAGSAIAPIINTFA and WPFTL.

As to expression, expressed in inflorescence stems, rosette leaves, aerial parts of seedlings, flowers, floral buds and roots.

The protein localises to the nucleus. In terms of biological role, transcription activator of STM and KNAT6. Involved in molecular mechanisms regulating shoot apical meristem (SAM) formation during embryogenesis and organ separation. Required for the fusion of septa of gynoecia along the length of the ovaries. Activates the shoot formation in callus in a STM-dependent manner. Seems to act as an inhibitor of cell division. The chain is Protein CUP-SHAPED COTYLEDON 1 (NAC054) from Arabidopsis thaliana (Mouse-ear cress).